The primary structure comprises 162 residues: Phosphopantetheine adenylyltransferase (162 aa).

Residue threonine 10 participates in substrate binding. ATP-binding positions include 10–11 (TF) and histidine 18. Substrate contacts are provided by lysine 42, methionine 74, and arginine 88. Residues 89–91 (GLR), glutamate 99, and 124–130 (YAFLSST) each bind ATP.

This sequence belongs to the bacterial CoaD family. In terms of assembly, homohexamer. The cofactor is Mg(2+).

It is found in the cytoplasm. The enzyme catalyses (R)-4'-phosphopantetheine + ATP + H(+) = 3'-dephospho-CoA + diphosphate. It functions in the pathway cofactor biosynthesis; coenzyme A biosynthesis; CoA from (R)-pantothenate: step 4/5. Reversibly transfers an adenylyl group from ATP to 4'-phosphopantetheine, yielding dephospho-CoA (dPCoA) and pyrophosphate. In Aliivibrio salmonicida (strain LFI1238) (Vibrio salmonicida (strain LFI1238)), this protein is Phosphopantetheine adenylyltransferase.